A 672-amino-acid polypeptide reads, in one-letter code: DNA mismatch repair protein MutL (672 aa).

The span at 443–454 (SYTSDSNQYENS) shows a compositional bias: polar residues. The interval 443 to 469 (SYTSDSNQYENSCKSDVDKESKSKTTG) is disordered. Basic and acidic residues predominate over residues 455–465 (CKSDVDKESKS).

Belongs to the DNA mismatch repair MutL/HexB family.

This protein is involved in the repair of mismatches in DNA. It is required for dam-dependent methyl-directed DNA mismatch repair. May act as a 'molecular matchmaker', a protein that promotes the formation of a stable complex between two or more DNA-binding proteins in an ATP-dependent manner without itself being part of a final effector complex. This chain is DNA mismatch repair protein MutL, found in Clostridium botulinum (strain Eklund 17B / Type B).